Reading from the N-terminus, the 54-residue chain is UPF0391 membrane protein Pmen_0080 (54 aa).

Transmembrane regions (helical) follow at residues 4-24 (WALT…GGIA) and 28-48 (AGIA…SFIM).

It belongs to the UPF0391 family.

Its subcellular location is the cell membrane. This is UPF0391 membrane protein Pmen_0080 from Ectopseudomonas mendocina (strain ymp) (Pseudomonas mendocina).